The chain runs to 784 residues: E3 UFM1-protein ligase 1 homolog (784 aa).

Residues 398–414 (QEVDHGVMEEEKADKRE) are compositionally biased toward basic and acidic residues. Positions 398-472 (QEVDHGVMEE…ASNKKGGKDP (75 aa)) are disordered.

It belongs to the UFL1 family.

Its function is as follows. E3 UFM1-protein ligase that mediates ufmylation of target proteins. This is E3 UFM1-protein ligase 1 homolog from Anopheles gambiae (African malaria mosquito).